An 81-amino-acid chain; its full sequence is RNA-binding protein Hfq (81 aa).

The Sm domain occupies 9–68 (DPFLNVLRRERVPVFIYLINGIKLQGEIESFDKFVILLRNTVNQMIYKHAISTIVPSRVV).

It belongs to the Hfq family. In terms of assembly, homohexamer.

In terms of biological role, RNA chaperone that binds small regulatory RNA (sRNAs) and mRNAs to facilitate mRNA translational regulation in response to envelope stress, environmental stress and changes in metabolite concentrations. Also binds with high specificity to tRNAs. The polypeptide is RNA-binding protein Hfq (Blochmanniella pennsylvanica (strain BPEN)).